Reading from the N-terminus, the 141-residue chain is MLTAEDKKLITQLWEKVAGHQEEFGSEALQRMFLAYPQTKTYFPHFDLHPGSEQVRGHGKKVAAALGNAVKSLDNLSQALSELSNLHAYNLRVDPVNFKLLAQCFQVVLAAHLGKDYSPEMHAAFDKFMSAVAAVLAEKYR.

The Globin domain occupies 1–141; it reads MLTAEDKKLI…VAAVLAEKYR (141 aa). 2 residues coordinate heme b: His-58 and His-87.

It belongs to the globin family. In terms of assembly, heterotetramer of two alpha-D chains and two beta chains. In terms of tissue distribution, red blood cells.

In terms of biological role, involved in oxygen transport from the lung to the various peripheral tissues. This Anas platyrhynchos (Mallard) protein is Hemoglobin subunit alpha-D (HBAD).